Here is a 193-residue protein sequence, read N- to C-terminus: Dual-action ribosomal maturation protein DarP (193 aa).

A compositionally biased stretch (basic and acidic residues) spans 1 to 10 (MRGRDEDTGE). 2 disordered regions span residues 1-20 (MRGR…SQQR) and 171-193 (QEQG…EDDE). A compositionally biased stretch (acidic residues) spans 181-193 (GLEDGESALEDDE).

It belongs to the DarP family.

It localises to the cytoplasm. In terms of biological role, member of a network of 50S ribosomal subunit biogenesis factors which assembles along the 30S-50S interface, preventing incorrect 23S rRNA structures from forming. Promotes peptidyl transferase center (PTC) maturation. The polypeptide is Dual-action ribosomal maturation protein DarP (Xanthomonas oryzae pv. oryzae (strain MAFF 311018)).